The following is a 261-amino-acid chain: Carnitinyl-CoA dehydratase (261 aa).

Glutamate 111 serves as the catalytic Nucleophile. Catalysis depends on glutamate 131, which acts as the Proton acceptor.

This sequence belongs to the enoyl-CoA hydratase/isomerase family.

It carries out the reaction (R)-carnitinyl-CoA = crotonobetainyl-CoA + H2O. It participates in amine and polyamine metabolism; carnitine metabolism. In terms of biological role, catalyzes the reversible dehydration of L-carnitinyl-CoA to crotonobetainyl-CoA. This Salmonella arizonae (strain ATCC BAA-731 / CDC346-86 / RSK2980) protein is Carnitinyl-CoA dehydratase.